The primary structure comprises 106 residues: Large ribosomal subunit protein eL42 (106 aa).

The interval 26–53 is disordered; the sequence is YKKGKDSLYAQGKRRYDRKQSGYGGQTK.

Belongs to the eukaryotic ribosomal protein eL42 family. As to quaternary structure, component of the large ribosomal subunit.

The protein resides in the cytoplasm. Functionally, component of the large ribosomal subunit. The ribosome is a large ribonucleoprotein complex responsible for the synthesis of proteins in the cell. The polypeptide is Large ribosomal subunit protein eL42 (rpl36a) (Danio rerio (Zebrafish)).